The chain runs to 672 residues: GPI mannosyltransferase pigv-1 (672 aa).

Residues 1–134 lie on the Cytoplasmic side of the membrane; that stretch reads MRRREPGRDV…TQRCLGFCFR (134 aa). Residues 82–94 show a composition bias toward basic and acidic residues; that stretch reads REESDSSSSREDS. The interval 82-115 is disordered; it reads REESDSSSSREDSPLGSTETGESCSTTDDEESKE. Over residues 97–107 the composition is skewed to low complexity; the sequence is GSTETGESCST. Residues 135–155 form a helical membrane-spanning segment; sequence QLFFSRMWVFILQFIASYYAG. At 156 to 239 the chain is on the extracellular side; the sequence is DRFRTDGFNL…NGMESVFGWT (84 aa). Residues 240–260 traverse the membrane as a helical segment; that stretch reads FPPWVTITLAAVFVNLFCFLL. The Cytoplasmic segment spans residues 261–277; the sequence is CGMTLYQVVLIMTRSVK. The next 2 helical transmembrane spans lie at 278-298 and 299-319; these read ISLL…FSSA and YSES…LFGL. At 320 to 345 the chain is on the extracellular side; that stretch reads RGKGFWHRMLKGFTGTICFGLTFAVR. The chain crosses the membrane as a helical span at residues 346 to 366; it reads SNGLLNFLYVAWIWCGTLLWD. Over 367 to 423 the chain is Cytoplasmic; that stretch reads EEMPIPDCHKLISTLAATKNERYKQEWQAKFWRFQQKRKQNRKVFRWTDPNFSRCVT. A helical transmembrane segment spans residues 424–444; sequence LFIVIVCAISATLLFFTPYVF. Residues 445–520 are Extracellular-facing; that stretch reads MTNFTADEFC…WSVKFFGYWK (76 aa). A helical membrane pass occupies residues 521–541; the sequence is IKKIPCFLMMLPAAILTVLAI. The Cytoplasmic segment spans residues 542 to 569; the sequence is KSSWNDVFLNKRWNNIWVLTARSDHSLP. Residues 570 to 590 traverse the membrane as a helical segment; that stretch reads MAIHSSVLLFVAIFYINSEVF. The Extracellular portion of the chain corresponds to 591-592; sequence TR. A helical transmembrane segment spans residues 593–613; sequence IIFSSSPFIYIYIATYIDKLT. The Cytoplasmic segment spans residues 614–648; it reads QGTIAGNRLWQYFESPGILPFFVFRRVWQDGWRGK. Residues 649–669 traverse the membrane as a helical segment; that stretch reads LLYIYILGYFVFGTMAHSAWL. Residues 670–672 lie on the Extracellular side of the membrane; it reads PFT.

It belongs to the PIGV family. As to expression, expressed in epithelial tissues including the epidermis, pharynx, intestine, rectum and excretory cell during embryogenesis.

The protein resides in the endoplasmic reticulum membrane. It participates in glycolipid biosynthesis; glycosylphosphatidylinositol-anchor biosynthesis. In terms of biological role, alpha-1,6-mannosyltransferase involved in glycosylphosphatidylinositol-anchor biosynthesis. Transfers the second mannose to the glycosylphosphatidylinositol during GPI precursor assembly. Required for maintenance of epithelial integrity during embryogenesis. The sequence is that of GPI mannosyltransferase pigv-1 from Caenorhabditis elegans.